A 338-amino-acid polypeptide reads, in one-letter code: tRNA N6-adenosine threonylcarbamoyltransferase (338 aa).

Fe cation contacts are provided by histidine 110, histidine 114, and tyrosine 131. Substrate is bound by residues tyrosine 131–glycine 135, aspartate 163, aspartate 184, and asparagine 268. Aspartate 296 contributes to the Fe cation binding site.

This sequence belongs to the KAE1 / TsaD family. Fe(2+) serves as cofactor.

It is found in the cytoplasm. It carries out the reaction L-threonylcarbamoyladenylate + adenosine(37) in tRNA = N(6)-L-threonylcarbamoyladenosine(37) in tRNA + AMP + H(+). Its function is as follows. Required for the formation of a threonylcarbamoyl group on adenosine at position 37 (t(6)A37) in tRNAs that read codons beginning with adenine. Is probably involved in the transfer of the threonylcarbamoyl moiety of threonylcarbamoyl-AMP (TC-AMP) to the N6 group of A37. This chain is tRNA N6-adenosine threonylcarbamoyltransferase, found in Staphylothermus marinus (strain ATCC 43588 / DSM 3639 / JCM 9404 / F1).